A 216-amino-acid chain; its full sequence is MFAQDAAQTGEQTTQNQGENGNNFVTEAITNYLIDDFEFANTWQASMPRDYGVVSIIRREGGPADVVAEGAENNKYILGAKVEYFRTGYPWFSVTPPRPVKIPGYTKELSVWVAGRNHNNRMSFYVYDVNGKPQAVGNEALNFMGWKNITVQIPANIRQEEFRGQVEQGISFMGIHVKVDPRDSYGKYYIYFDQLMAKTDMYLETYREEDDPLDTW.

Residues 1–22 (MFAQDAAQTGEQTTQNQGENGN) are disordered. The segment covering 8-22 (QTGEQTTQNQGENGN) has biased composition (low complexity).

Its subcellular location is the periplasmic flagellum. It localises to the periplasm. Its function is as follows. Might be part of the flagella. In Brachyspira hyodysenteriae (strain ATCC 49526 / WA1), this protein is Putative flagellar filament outer layer-like protein (flaAL).